Consider the following 135-residue polypeptide: Cytochrome b-c1 complex subunit 6, mitochondrial (135 aa).

Positions 1–70 are disordered; it reads MSFFRDLLES…ETADPLDTLR (70 aa). A compositionally biased stretch (acidic residues) spans 19–64; the sequence is EPVEDVEVEQPEDAPEEEVSEETVEEEEDDDEDDDEDDEEEEETAD.

It belongs to the UQCRH/QCR6 family. As to quaternary structure, component of the ubiquinol-cytochrome c oxidoreductase (cytochrome b-c1 complex, complex III, CIII), a multisubunit enzyme composed of 10 subunits. The complex is composed of 3 respiratory subunits cytochrome b (COB), cytochrome c1 (CYT1) and Rieske protein (RIP1), 2 core protein subunits COR1 and QCR2, and 5 low-molecular weight protein subunits QCR6, QCR7, QCR8, QCR9 and QCR10. The complex exists as an obligatory dimer and forms supercomplexes (SCs) in the inner mitochondrial membrane with a monomer or a dimer of cytochrome c oxidase (complex IV, CIV), resulting in 2 different assemblies (supercomplexes III(2)IV and III(2)IV(2)).

The protein resides in the mitochondrion inner membrane. Functionally, component of the ubiquinol-cytochrome c oxidoreductase, a multisubunit transmembrane complex that is part of the mitochondrial electron transport chain which drives oxidative phosphorylation. The complex plays an important role in the uptake of multiple carbon sources present in different host niches. This chain is Cytochrome b-c1 complex subunit 6, mitochondrial, found in Candida albicans (strain SC5314 / ATCC MYA-2876) (Yeast).